The primary structure comprises 183 residues: Putative manganese efflux pump MntP (183 aa).

The next 6 helical transmembrane spans lie at 8–28, 39–59, 68–88, 108–128, 133–153, and 162–182; these read MIALSLMALALGMDAFSVALG, IFYIGLTIGLFHIFMPLVGMA, FGSIATYAGGVLLLWLGGQMI, LFFAFSVSLDSFSVGLSLGIF, MATILLFGLFSTVLTWIGLLV, and GSYSEALGGSILLVFGLKLLF.

This sequence belongs to the MntP (TC 9.B.29) family.

The protein localises to the cell membrane. Its function is as follows. Probably functions as a manganese efflux pump. The chain is Putative manganese efflux pump MntP from Geobacillus thermodenitrificans (strain NG80-2).